The primary structure comprises 285 residues: METLLSPRALSPPLNPKPLSLHQTKPTSHSLSLSKPTTFSGPKHLSTRFTKPESRNWLIDAKQGLAALALSLTLTFSPVGTALASEFNILNDGPPKETYVVDDAGVLSRVTKSDLKKLLSDLEYRKKLRLNFITVRKLTSKADAFEYADQVLEKWYPSIEEGNNKGIVVLITSQKEGAITGGPAFIEAVGENILDATVSENLPVLATDEKYNEAVYSSAKRLVAAIDGQPDPGGPTVKDSKRESNFKTKEETDEKRGQFSLVVGGLLVIAFVVPMAQYFAYVSRK.

2 disordered regions span residues 1-48 and 228-251; these read METL…LSTR and GQPD…TKEE. Polar residues predominate over residues 22–40; that stretch reads HQTKPTSHSLSLSKPTTFS. Over residues 238-251 the composition is skewed to basic and acidic residues; the sequence is KDSKRESNFKTKEE. The chain crosses the membrane as a helical span at residues 259–279; the sequence is FSLVVGGLLVIAFVVPMAQYF.

It belongs to the UPF0603 family.

Its subcellular location is the plastid. The protein resides in the chloroplast thylakoid membrane. This chain is UPF0603 protein At1g54780, chloroplastic, found in Arabidopsis thaliana (Mouse-ear cress).